Here is a 485-residue protein sequence, read N- to C-terminus: Protein LAZ1 (485 aa).

Over 1 to 19 (MDILKSYHLLAAAYSAPAW) the chain is Cytoplasmic. A helical membrane pass occupies residues 20–40 (ASFMAGAFLVLTLSLSLFLVF). The Lumenal segment spans residues 41–53 (DHLSTYKNPEEQK). The helical transmembrane segment at 54-74 (FLIGVILMVPCYSIESFASLV) threads the bilayer. Topologically, residues 75 to 167 (KPSISVDCGI…QVVKFGIVQY (93 aa)) are cytoplasmic. A helical transmembrane segment spans residues 168–188 (MIIKSLTALTALILEAFGVYC). The Lumenal segment spans residues 189–196 (EGEFKWGC). The chain crosses the membrane as a helical span at residues 197–217 (GYPYLAVVLNFSQSWALYCLV). At 218–241 (QFYGATKDELAHIQPLAKFLTFKS) the chain is on the cytoplasmic side. A helical transmembrane segment spans residues 242–262 (IVFLTWWQGVAIALLSSLGLF). Over 263-277 (KSSIAQSLQLKTSVQ) the chain is Lumenal. A helical membrane pass occupies residues 278 to 298 (DFIICIEMGIASVVHLYVFPA). Over 299 to 485 (KPYGLMGDRF…VRGRRWITKD (187 aa)) the chain is Cytoplasmic. Residues 384-415 (MEKSITKFNEKLHKISQNIKKHDKEKRRVKDD) adopt a coiled-coil conformation. Residues 400 to 485 (QNIKKHDKEK…VRGRRWITKD (86 aa)) form a disordered region. The segment covering 403 to 416 (KKHDKEKRRVKDDS) has biased composition (basic and acidic residues). Positions 455–469 (GYTSAESGGESSSDQ) are enriched in polar residues. Residues 476–485 (VRGRRWITKD) show a composition bias toward basic and acidic residues.

This sequence belongs to the TMEM184 family.

The protein resides in the endomembrane system. Its subcellular location is the cell membrane. It localises to the cytoplasm. It is found in the cytosol. Its function is as follows. Required for programmed cell death (PCD) associated with hypersensitive response (HR). Involved both in the induction of EDS1/PAD4 mediated HR and in accelerated cell death in the acd11 mutant. Not required for HR induction elicited through pathways exclusively dependent on CC-NB-LRR resistance proteins. In Arabidopsis thaliana (Mouse-ear cress), this protein is Protein LAZ1.